We begin with the raw amino-acid sequence, 92 residues long: Alpha-conotoxin FrXXA (92 aa).

The signal sequence occupies residues 1–24; the sequence is MPKLEMMLLVLLILPLSYFDSAGG. The propeptide occupies 25–45; it reads QAVKVDGHGDGMDRYLQRDDR. Intrachain disulfides connect Cys63–Cys72, Cys68–Cys80, Cys73–Cys90, and Cys78–Cys92.

This sequence belongs to the conotoxin D superfamily. As to quaternary structure, homodimer; disulfide-linked. In terms of processing, the homodimer contains 10 disulfide bonds. Expressed by the venom duct.

It localises to the secreted. In terms of biological role, alpha-conotoxins act on postsynaptic membranes, they bind to the nicotinic acetylcholine receptors (nAChR) and thus inhibit them. Through its two C-terminal domains, this homodimeric protein would bind to two nAChR allosteric sites, located outside the nAChR C-loop of the principal binding face and at the adjacent binding interface in a clockwise direction. This toxin blocks both neuronal and muscular subtypes: human alpha-7/CHRNA7, human alpha-3-beta-2 (CHRNA3-CHRNB2), human alpha-4-beta-2 (CHRNA4-CHRNB2), mouse adult muscular subtype alpha-1-beta-1-delta-epsilon (CHRNA1-CHRNB1-CHRND-CHRNE), and mouse fetal muscular subtype alpha-1-beta-1-gamma-delta (CHRNA1-CHRNB1-CHRNG-CHRND). Shows different dissociation rates towards the different subtypes, with a very slow rate towards alpha-7 subtype (almost irreversible), followed by the adult muscular subtype, the fetal muscular subtype, alpha-3-beta-2 and alpha-4-beta-2 (almost entirely reversible within a few minutes of washing). The protein is Alpha-conotoxin FrXXA of Conus fergusoni (Ferguson's cone).